Consider the following 837-residue polypeptide: MSLSHLYRDGEGRIDDDDDERENFEITDWDLQNEFNPNRQRHWQTKEEATYGVWAERDSDDERPSFGGKRARDYSAPVNFISAGLKKGAAEEAELEDSDDEEKPVKQDDFPKDFGPRKLKTGGNFKPSQKGFAGGTKSFMDFGSWERHTKGIGQKLLQKMGYVPGRGLGKNAQGIINPIEAKQRKGKGAVGAYGSERTTQSMQDFPVVDSEEEAEEEFQKELSQWRKDPSGSKKKPKYSYKTVEELKAKGRISKKLTAPQKELSQVKVIDMTGREQKVYYSYSQISHKHNVPDDGLPLQSQQLPQSGKEAKAPGFALPELEHNLQLLIDLTEQEIIQNDRQLQYERDMVVNLFHELEKMTEVLDHEERVISNLSKVLEMVEECERRMQPDCSNPLTLDECARIFETLQDKYYEEYRMSDRVDLAVAIVYPLMKEYFKEWDPLKDCTYGTEIISKWKSLLENDQLLSHGGQDLSADAFHRLIWEVWMPFVRNIVTQWQPRNCDPMVDFLDSWVHIIPVWILDNILDQLIFPKLQKEVENWNPLTDTVPIHSWIHPWLPLMQARLEPLYSPIRSKLSSALQKWHPSDSSAKLILQPWKDVFTPGSWEAFMVKNIVPKLGMCLGELVINPHQQHMDAFYWVIDWEGMISVSSLVGLLEKHFFPKWLQVLCSWLSNSPNYEEITKWYLGWKSMFSDQVLAHPSVKDKFNEALDIMNRAVSSNVGAYMQPGARENIAYLTHTERRKDFQYEAMQERREAENMAQRGIGVAASSVPMNFKDLIETKAEEHNIVFMPVIGKRHEGKQLYTFGRIVIYIDRGVVFVQGEKTWVPTSLQSLIDMAK.

Basic and acidic residues-rich tracts occupy residues 1 to 13 (MSLSHLYRDGEGR) and 53 to 64 (VWAERDSDDERP). Disordered stretches follow at residues 1–21 (MSLSHLYRDGEGRIDDDDDER), 53–72 (VWAERDSDDERPSFGGKRAR), and 85–133 (LKKG…KGFA). Positions 1 to 50 (MSLSHLYRDGEGRIDDDDDERENFEITDWDLQNEFNPNRQRHWQTKEEAT) are required for interaction with DHX15. 3 positions are modified to phosphoserine: Ser2, Ser59, and Ser98. Acidic residues predominate over residues 91-102 (EEAELEDSDDEE). Residues 103–116 (KPVKQDDFPKDFGP) show a composition bias toward basic and acidic residues. Residue Ser144 is modified to Phosphoserine. A G-patch domain is found at 149-195 (TKGIGQKLLQKMGYVPGRGLGKNAQGIINPIEAKQRKGKGAVGAYGS). The interval 179–236 (IEAKQRKGKGAVGAYGSERTTQSMQDFPVVDSEEEAEEEFQKELSQWRKDPSGSKKKP) is disordered. Ser210 is subject to Phosphoserine. Basic and acidic residues predominate over residues 217-231 (EFQKELSQWRKDPSG). The Nuclear localization signal motif lies at 700-705 (VKDKFN). Residues 710–734 (IMNRAVSSNVGAYMQPGARENIAYL) are required for nuclear speckle localization.

It belongs to the TFP11/STIP family. Identified in the spliceosome C complex. Found in the Intron Large (IL) complex, a post-mRNA release spliceosomal complex containing the excised intron, U2, U5 and U6 snRNPs, and splicing factors. Interacts with TUFT1. Interacts with DHX15; indicative for a recruitment of DHX15 to the IL complex. Interacts with GCFC2.

The protein resides in the cytoplasm. The protein localises to the nucleus. In terms of biological role, involved in pre-mRNA splicing, specifically in spliceosome disassembly during late-stage splicing events. Intron turnover seems to proceed through reactions in two lariat-intron associated complexes termed Intron Large (IL) and Intron Small (IS). In cooperation with DHX15 seems to mediate the transition of the U2, U5 and U6 snRNP-containing IL complex to the snRNP-free IS complex leading to efficient debranching and turnover of excised introns. May play a role in the differentiation of ameloblasts and odontoblasts or in the forming of the enamel extracellular matrix. The protein is Tuftelin-interacting protein 11 (TFIP11) of Homo sapiens (Human).